The following is a 381-amino-acid chain: Adenylate cyclase (381 aa).

Residues 1–30 are disordered; that stretch reads MTVDDTGSGADGDGRVDPEPAPDSADPGED. A Guanylate cyclase domain is found at 191 to 300; sequence AVGFADLVGF…TTVNLASRLT (110 aa). The Mg(2+) site is built by aspartate 196 and aspartate 240.

Belongs to the adenylyl cyclase class-3 family. Mg(2+) is required as a cofactor.

The enzyme catalyses ATP = 3',5'-cyclic AMP + diphosphate. In Streptomyces coelicolor (strain ATCC BAA-471 / A3(2) / M145), this protein is Adenylate cyclase (cya).